The chain runs to 761 residues: Hyperosmolality-gated Ca2+ permeable channel 1.6 (761 aa).

The next 10 membrane-spanning stretches (helical) occupy residues 7–27 (IGVAAAINIVTAFAFLLAFAI), 101–121 (IYLLGLKIFFPIACVAFTTMV), 156–176 (PRFWVHLCMAYAITFWTCFIL), 375–395 (LIVGVAYFFLTFFFMIPIAFV), 419–439 (LLKSIIQGFLPGIALKIFLLF), 467–487 (FYMFQFINVFLGSIVTGTAFQ), 512–532 (ATFFITYIMVDGWAGVAGEIL), 583–603 (AAVSPILLPFILVFFGLAFVV), 630–650 (VVTALVVSQLLLMGLLSTKHA), and 653–673 (STPLLLVLPLLTIGFHKHCKN). The segment covering 718–731 (RVGEDPEPEEKLES) has biased composition (basic and acidic residues). Positions 718–761 (RVGEDPEPEEKLESDMSPPDLVATKRWSWRNTPLPSKDSCREIP) are disordered.

The protein belongs to the CSC1 (TC 1.A.17) family.

The protein localises to the membrane. In terms of biological role, acts as an osmosensitive calcium-permeable cation channel. In Arabidopsis thaliana (Mouse-ear cress), this protein is Hyperosmolality-gated Ca2+ permeable channel 1.6.